A 91-amino-acid polypeptide reads, in one-letter code: DNA-directed RNA polymerase subunit omega (91 aa).

Belongs to the RNA polymerase subunit omega family. As to quaternary structure, the RNAP catalytic core consists of 2 alpha, 1 beta, 1 beta' and 1 omega subunit. When a sigma factor is associated with the core the holoenzyme is formed, which can initiate transcription.

It carries out the reaction RNA(n) + a ribonucleoside 5'-triphosphate = RNA(n+1) + diphosphate. Functionally, promotes RNA polymerase assembly. Latches the N- and C-terminal regions of the beta' subunit thereby facilitating its interaction with the beta and alpha subunits. This chain is DNA-directed RNA polymerase subunit omega, found in Photorhabdus laumondii subsp. laumondii (strain DSM 15139 / CIP 105565 / TT01) (Photorhabdus luminescens subsp. laumondii).